A 900-amino-acid polypeptide reads, in one-letter code: Translation initiation factor IF-2 (900 aa).

Over residues 80 to 95 (LEEQSRKTVEKEDQLR) the composition is skewed to basic and acidic residues. Disordered regions lie at residues 80 to 106 (LEEQ…VPGR), 149 to 169 (AVEA…DSPV), and 221 to 268 (DEFD…VDEK). The segment covering 253–262 (GKKKGKKKKK) has biased composition (basic residues). The tr-type G domain maps to 397-567 (TRPPVVTIMG…LTEAEVRELK (171 aa)). The segment at 406 to 413 (GHVDHGKT) is G1. 406-413 (GHVDHGKT) is a binding site for GTP. The tract at residues 431–435 (GITQH) is G2. A G3 region spans residues 453–456 (DTPG). GTP is bound by residues 453-457 (DTPGH) and 507-510 (NKID). Residues 507–510 (NKID) form a G4 region. The segment at 543-545 (SAK) is G5.

Belongs to the TRAFAC class translation factor GTPase superfamily. Classic translation factor GTPase family. IF-2 subfamily.

Its subcellular location is the cytoplasm. Its function is as follows. One of the essential components for the initiation of protein synthesis. Protects formylmethionyl-tRNA from spontaneous hydrolysis and promotes its binding to the 30S ribosomal subunits. Also involved in the hydrolysis of GTP during the formation of the 70S ribosomal complex. The protein is Translation initiation factor IF-2 of Chlorobium phaeovibrioides (strain DSM 265 / 1930) (Prosthecochloris vibrioformis (strain DSM 265)).